The chain runs to 310 residues: Methionyl-tRNA formyltransferase (310 aa).

110-113 (SLLP) contributes to the (6S)-5,6,7,8-tetrahydrofolate binding site.

Belongs to the Fmt family.

The enzyme catalyses L-methionyl-tRNA(fMet) + (6R)-10-formyltetrahydrofolate = N-formyl-L-methionyl-tRNA(fMet) + (6S)-5,6,7,8-tetrahydrofolate + H(+). Attaches a formyl group to the free amino group of methionyl-tRNA(fMet). The formyl group appears to play a dual role in the initiator identity of N-formylmethionyl-tRNA by promoting its recognition by IF2 and preventing the misappropriation of this tRNA by the elongation apparatus. The chain is Methionyl-tRNA formyltransferase from Clostridium acetobutylicum (strain ATCC 824 / DSM 792 / JCM 1419 / IAM 19013 / LMG 5710 / NBRC 13948 / NRRL B-527 / VKM B-1787 / 2291 / W).